We begin with the raw amino-acid sequence, 188 residues long: UPF0232 protein RHA1_ro03670 (188 aa).

Disordered stretches follow at residues 1–20 (MTDDLEPTAPAAAAPEPEVK), 31–78 (EARA…QPFG), and 166–188 (PTAPSWRKGERHIRGRGPRDTYG). A compositionally biased stretch (low complexity) spans 7–16 (PTAPAAAAPE).

This sequence belongs to the UPF0232 family.

The chain is UPF0232 protein RHA1_ro03670 from Rhodococcus jostii (strain RHA1).